Consider the following 344-residue polypeptide: L-rhamnose-proton symporter (344 aa).

Helical transmembrane passes span 4–24, 38–58, 68–88, 101–121, 137–157, 175–195, 214–234, 259–279, 290–310, and 323–343; these read AITM…CFYA, WSVG…ALLL, FSLS…IGNI, MGIG…TPII, TLLG…AGQL, LVLA…MNAA, LPSY…FCFI, VLLS…YAWG, ISWM…GLVL, and VLSL…IGMA.

Belongs to the L-rhamnose transporter (TC 2.A.7.6) family.

It localises to the cell inner membrane. It carries out the reaction L-rhamnopyranose(in) + H(+)(in) = L-rhamnopyranose(out) + H(+)(out). Uptake of L-rhamnose across the cytoplasmic membrane with the concomitant transport of protons into the cell (symport system). The chain is L-rhamnose-proton symporter from Escherichia coli O127:H6 (strain E2348/69 / EPEC).